Here is a 1904-residue protein sequence, read N- to C-terminus: Voltage-dependent calcium channel type A subunit alpha-1 (1904 aa).

The disordered stretch occupies residues 1-45; the sequence is MLGGVGGRHMSTRRRGSSPLVRGGAGLTGYAGPGASGNSNDVAAI. Gly residues predominate over residues 23-35; sequence GGAGLTGYAGPGA. Residues 30-168 lie on the Cytoplasmic side of the membrane; that stretch reads YAGPGASGNS…KHTRFIIEWP (139 aa). An I repeat occupies 155 to 447; that stretch reads NCIRKHTRFI…LVLGVLSGEF (293 aa). A helical transmembrane segment spans residues 169 to 187; the sequence is PFEYAVLLTIIANCVVLAL. The Extracellular segment spans residues 188–205; sequence EEHLPKQDKTILAQKLEA. A helical transmembrane segment spans residues 206–225; the sequence is TEIYFLGIFCVEASLKILAL. Residues 226-237 are Cytoplasmic-facing; it reads GFVLHRGSYLRN. A helical membrane pass occupies residues 238-259; it reads IWNIMDFFVVVTGFITAFSQGI. Over 260–264 the chain is Extracellular; that stretch reads ELDMD. A helical membrane pass occupies residues 265-283; sequence LRTLRAIRVLRPLKLVSGI. At 284-302 the chain is on the cytoplasmic side; the sequence is PSLQVVLKSIIKAMAPLLQ. Residues 303-322 traverse the membrane as a helical segment; the sequence is IGLLVLFAIVIFAIIGLEFY. The Extracellular portion of the chain corresponds to 323–419; it reads SGTLHKTCYS…WTNDALGSTY (97 aa). N-linked (GlcNAc...) asparagine glycosylation is found at Asn-353 and Asn-367. The chain crosses the membrane as a helical span at residues 420-444; the sequence is NWIYFIPLIVLGSFFMLNLVLGVLS. Residues 445–568 are Cytoplasmic-facing; it reads GEFAKEREKV…YWIRKSVKSQ (124 aa). The segment at 513–543 is disordered; the sequence is KKLGKSKSTDTEEEEGDDDQDDGELSSSTKE. Residues 523–536 are compositionally biased toward acidic residues; it reads TEEEEGDDDQDDGE. An II repeat occupies 554–797; that stretch reads EKRFRYWIRK…VFLAIAVDNL (244 aa). Residues 569-587 form a helical membrane-spanning segment; that stretch reads KFYWFVIVLVFFNTVCVAV. Topologically, residues 588-602 are extracellular; the sequence is EHYGQPQWLTDFLYF. A helical transmembrane segment spans residues 603-622; that stretch reads AEFVFLALFMLEMFIKVYAL. Residues 623-630 are Cytoplasmic-facing; sequence GPRTYFDS. A helical membrane pass occupies residues 631-649; that stretch reads SFNRFDCVVISGSIFEVIW. Topologically, residues 650–658 are extracellular; that stretch reads SEVKSGSFG. The helical transmembrane segment at 659–677 threads the bilayer; the sequence is LSVLRALRLLRIFKVTKYW. Residues 678–696 lie on the Cytoplasmic side of the membrane; the sequence is KSLRNLVISLLSSMRSIIS. The helical transmembrane segment at 697–716 threads the bilayer; it reads LLFLLFLFILIFALLGMQLF. Topologically, residues 717–769 are extracellular; sequence GGQFNFDSGTPPTNFNTFPIALLTVFQILTGEDWNEVMYQGIESQGGHKKGMI. A helical membrane pass occupies residues 770–794; sequence YSLYFIVLVLFGNYTLLNVFLAIAV. Topologically, residues 795–895 are cytoplasmic; the sequence is DNLANAQELS…VRRAAHWVVN (101 aa). Residues 827 to 869 form a disordered region; it reads QSLQNPKDGGAPKVEICPPNGKGGKQSSEEEKKQDEDDDTGPK. An III repeat occupies 890 to 1177; that stretch reads AHWVVNLRYF…IITFQEQGEA (288 aa). Residues 896-914 traverse the membrane as a helical segment; that stretch reads LRYFDFFIMVVISLSSIAL. Residues 915 to 930 lie on the Extracellular side of the membrane; sequence AAEDPVWEDSPRNEVL. A helical transmembrane segment spans residues 931–950; sequence NYFDYAFTGVFTVEMILKII. At 951–962 the chain is on the cytoplasmic side; the sequence is DLGIILHPGSYL. Residues 963-981 form a helical membrane-spanning segment; sequence REFWNIMDAVVVICAAVSF. Residues 982-994 lie on the Extracellular side of the membrane; the sequence is AFDMTGSSAGQNL. Asn-993 carries an N-linked (GlcNAc...) asparagine glycan. A helical membrane pass occupies residues 995–1013; the sequence is STIKSLRVLRVLRPLKTIK. The Cytoplasmic segment spans residues 1014-1032; it reads RVPKLKAVFDCVVNSLKNV. A helical transmembrane segment spans residues 1033–1052; that stretch reads INILIVYILFQFIFAVIAVQ. The Extracellular portion of the chain corresponds to 1053–1141; that stretch reads LFNGKFFYCS…EDKGPIQNFR (89 aa). The helical transmembrane segment at 1142–1166 threads the bilayer; that stretch reads IEMSIFYIVYFIVFPFFFVNIFVAL. The Cytoplasmic portion of the chain corresponds to 1167–1221; it reads IIITFQEQGEAELQDGEIDKNQKSCIDFTIQARPLERYMPKERNSVKYKIWRIVV. One copy of the IV repeat lies at 1214–1470; it reads YKIWRIVVST…DNFDYLTRDS (257 aa). The chain crosses the membrane as a helical span at residues 1222-1250; that stretch reads STPFEYFIMGLIVLNTVLLMMKFHRQSDA. At 1251 to 1255 the chain is on the extracellular side; it reads YKNTL. A helical transmembrane segment spans residues 1256–1275; the sequence is KYMNMCFTGMFTVECILKIA. The Cytoplasmic segment spans residues 1276–1283; that stretch reads AFGVRNFF. A helical membrane pass occupies residues 1284–1302; that stretch reads KDAWNTFDFITVIGSIVDA. Residues 1303–1309 lie on the Extracellular side of the membrane; that stretch reads LVIEFGE. A helical transmembrane segment spans residues 1310–1328; sequence NFINVGFLRLFRAARLIKL. At 1329-1347 the chain is on the cytoplasmic side; that stretch reads LRQGYTIRILLWTFVQSFK. The helical transmembrane segment at 1348 to 1367 threads the bilayer; sequence ALPYVCLLIAMLFFIYAIIG. The Extracellular portion of the chain corresponds to 1368-1431; the sequence is MQVFGNIALD…AKAGKQEGGC (64 aa). The phenylalkylamine binding stretch occupies residues 1430–1471; it reads GCGSNIAYAYFVSFIFFCSFLMLNLFVAVIMDNFDYLTRDSS. The chain crosses the membrane as a helical span at residues 1432–1456; it reads GSNIAYAYFVSFIFFCSFLMLNLFV. Residues 1457 to 1904 lie on the Cytoplasmic side of the membrane; it reads AVIMDNFDYL…HSDSDEDDWC (448 aa). The 36-residue stretch at 1476 to 1511 folds into the EF-hand domain; it reads HHLDEFVRIWAEYDPNATGKIHYTEMYDMLKNMDPP. Residues Asp-1489, Asn-1491, Thr-1493, Lys-1495, and Glu-1500 each coordinate Ca(2+). Disordered stretches follow at residues 1652–1694, 1710–1788, and 1870–1904; these read THTG…HEGP, THHP…HSYP, and GGRLLPSPVPNGYKPQPQAKQRTPRHSDSDEDDWC. The span at 1670–1681 shows a compositional bias: low complexity; the sequence is RSPSLRHSPGRP. A compositionally biased stretch (basic and acidic residues) spans 1682–1691; it reads GYDHHGHYYH. Positions 1710 to 1725 are enriched in basic residues; that stretch reads THHPHPSQYNHRHRMR. A compositionally biased stretch (low complexity) spans 1727–1740; the sequence is PWSASTSPARTPSP. The span at 1751-1762 shows a compositional bias: polar residues; sequence GTTSLEQRSRSP. Positions 1771 to 1784 are enriched in basic residues; it reads PHTHQHYHRHHPHQ.

The protein belongs to the calcium channel alpha-1 subunit (TC 1.A.1.11) family. CACNA1I subfamily. In terms of assembly, interacts with CATSPER1 and CATSPER2, leading to suppress T-type calcium channel activity.

Its subcellular location is the membrane. In terms of biological role, voltage-sensitive calcium channels (VSCC) mediate the entry of calcium ions into excitable cells and are also involved in a variety of calcium-dependent processes, including muscle contraction, neurotransmitter release, gene expression, cell motility, cell division and cell death. This is Voltage-dependent calcium channel type A subunit alpha-1 (CAC) from Apis mellifera (Honeybee).